The following is a 66-amino-acid chain: Large ribosomal subunit protein uL29 (66 aa).

Belongs to the universal ribosomal protein uL29 family.

In Thermotoga sp. (strain RQ2), this protein is Large ribosomal subunit protein uL29.